We begin with the raw amino-acid sequence, 321 residues long: Glucokinase (321 aa).

8–13 (GDVGGT) is a binding site for ATP.

Belongs to the bacterial glucokinase family.

It localises to the cytoplasm. The catalysed reaction is D-glucose + ATP = D-glucose 6-phosphate + ADP + H(+). The chain is Glucokinase from Cronobacter sakazakii (strain ATCC BAA-894) (Enterobacter sakazakii).